Reading from the N-terminus, the 757-residue chain is Elongation factor G, mitochondrial (757 aa).

Residues 1 to 39 constitute a mitochondrion transit peptide; the sequence is MLLVPRVPVVMQGKCGLLKISRPLQGSLSRGFHFSRAHR. The tr-type G domain maps to 65–346; the sequence is QKLRNIGISA…AIVDYLPNPS (282 aa). Residues 74 to 81, 145 to 149, and 199 to 202 each bind GTP; these read AHIDSGKT, DTPGH, and NKMD.

The protein belongs to the TRAFAC class translation factor GTPase superfamily. Classic translation factor GTPase family. EF-G/EF-2 subfamily.

The protein resides in the mitochondrion. It functions in the pathway protein biosynthesis; polypeptide chain elongation. Its function is as follows. Mitochondrial GTPase that catalyzes the GTP-dependent ribosomal translocation step during translation elongation. During this step, the ribosome changes from the pre-translocational (PRE) to the post-translocational (POST) state as the newly formed A-site-bound peptidyl-tRNA and P-site-bound deacylated tRNA move to the P and E sites, respectively. Catalyzes the coordinated movement of the two tRNA molecules, the mRNA and conformational changes in the ribosome. This Candida glabrata (strain ATCC 2001 / BCRC 20586 / JCM 3761 / NBRC 0622 / NRRL Y-65 / CBS 138) (Yeast) protein is Elongation factor G, mitochondrial.